Reading from the N-terminus, the 348-residue chain is S-adenosylmethionine:tRNA ribosyltransferase-isomerase (348 aa).

The protein belongs to the QueA family. Monomer.

It is found in the cytoplasm. It catalyses the reaction 7-aminomethyl-7-carbaguanosine(34) in tRNA + S-adenosyl-L-methionine = epoxyqueuosine(34) in tRNA + adenine + L-methionine + 2 H(+). The protein operates within tRNA modification; tRNA-queuosine biosynthesis. In terms of biological role, transfers and isomerizes the ribose moiety from AdoMet to the 7-aminomethyl group of 7-deazaguanine (preQ1-tRNA) to give epoxyqueuosine (oQ-tRNA). This is S-adenosylmethionine:tRNA ribosyltransferase-isomerase from Polynucleobacter asymbioticus (strain DSM 18221 / CIP 109841 / QLW-P1DMWA-1) (Polynucleobacter necessarius subsp. asymbioticus).